The chain runs to 92 residues: ATP synthase subunit c (92 aa).

Helical transmembrane passes span 20 to 40 (GAGL…GTGL) and 71 to 91 (MAIS…LVFV).

It belongs to the ATPase C chain family. As to quaternary structure, F-type ATPases have 2 components, F(1) - the catalytic core - and F(0) - the membrane proton channel. F(1) has five subunits: alpha(3), beta(3), gamma(1), delta(1), epsilon(1). F(0) has three main subunits: a(1), b(2) and c(10-14). The alpha and beta chains form an alternating ring which encloses part of the gamma chain. F(1) is attached to F(0) by a central stalk formed by the gamma and epsilon chains, while a peripheral stalk is formed by the delta and b chains.

The protein resides in the cell membrane. Functionally, f(1)F(0) ATP synthase produces ATP from ADP in the presence of a proton or sodium gradient. F-type ATPases consist of two structural domains, F(1) containing the extramembraneous catalytic core and F(0) containing the membrane proton channel, linked together by a central stalk and a peripheral stalk. During catalysis, ATP synthesis in the catalytic domain of F(1) is coupled via a rotary mechanism of the central stalk subunits to proton translocation. Key component of the F(0) channel; it plays a direct role in translocation across the membrane. A homomeric c-ring of between 10-14 subunits forms the central stalk rotor element with the F(1) delta and epsilon subunits. The polypeptide is ATP synthase subunit c (Mycoplasmopsis pulmonis (strain UAB CTIP) (Mycoplasma pulmonis)).